The sequence spans 145 residues: Transcriptional regulator SlyA (145 aa).

Residues 2–135 (ELPLGSDLAR…LALLVARLEK (134 aa)) enclose the HTH marR-type domain. The segment at residues 49 to 72 (QIQLAKAIGIEQPSLVRTLDQLEE) is a DNA-binding region (H-T-H motif).

It belongs to the SlyA family. As to quaternary structure, homodimer.

Transcription regulator that can specifically activate or repress expression of target genes. This chain is Transcriptional regulator SlyA, found in Pectobacterium carotovorum subsp. carotovorum (strain PC1).